The chain runs to 206 residues: FMN-dependent NADH:quinone oxidoreductase 1 (206 aa).

Residues S10 and 16-18 (SLS) contribute to the FMN site.

Belongs to the azoreductase type 1 family. As to quaternary structure, homodimer. It depends on FMN as a cofactor.

It catalyses the reaction 2 a quinone + NADH + H(+) = 2 a 1,4-benzosemiquinone + NAD(+). The catalysed reaction is N,N-dimethyl-1,4-phenylenediamine + anthranilate + 2 NAD(+) = 2-(4-dimethylaminophenyl)diazenylbenzoate + 2 NADH + 2 H(+). Quinone reductase that provides resistance to thiol-specific stress caused by electrophilic quinones. In terms of biological role, also exhibits azoreductase activity. Catalyzes the reductive cleavage of the azo bond in aromatic azo compounds to the corresponding amines. This is FMN-dependent NADH:quinone oxidoreductase 1 from Burkholderia lata (strain ATCC 17760 / DSM 23089 / LMG 22485 / NCIMB 9086 / R18194 / 383).